The primary structure comprises 377 residues: ATP-dependent (S)-NAD(P)H-hydrate dehydratase (377 aa).

In terms of domain architecture, YjeF C-terminal spans 10 to 366 (LLHLSRQLIQ…EYLHESFTEL (357 aa)). Residues Gly148 and 201 to 207 (NVVEFQR) contribute to the (6S)-NADPHX site. ATP contacts are provided by residues 245–249 (KGEHD) and 264–273 (GSNKRVGGQG). Asp274 is a binding site for (6S)-NADPHX.

This sequence belongs to the NnrD/CARKD family. It depends on Mg(2+) as a cofactor.

Its subcellular location is the cytoplasm. The enzyme catalyses (6S)-NADHX + ATP = ADP + phosphate + NADH + H(+). The catalysed reaction is (6S)-NADPHX + ATP = ADP + phosphate + NADPH + H(+). Its function is as follows. Catalyzes the dehydration of the S-form of NAD(P)HX at the expense of ATP, which is converted to ADP. Together with NAD(P)HX epimerase, which catalyzes the epimerization of the S- and R-forms, the enzyme allows the repair of both epimers of NAD(P)HX, a damaged form of NAD(P)H that is a result of enzymatic or heat-dependent hydration. The protein is ATP-dependent (S)-NAD(P)H-hydrate dehydratase of Candida albicans (strain SC5314 / ATCC MYA-2876) (Yeast).